Here is a 244-residue protein sequence, read N- to C-terminus: MGGREATMVLMDENGKRCDGRTVDEPRRIMIKAGGLKNADGSSYIEFGDNKILVGVFGPRDVHPKHMSDTDTGILRVRYHMEPFSVGERKNPAPSRREIEISKVIKEALEPAVMLEKFPRTAVDVFIEVLQADGGTRCAALTAASVALADAGIPMRDMVAAIAAGKVADTVILDVNNEEDQAGQADMPIGYMPNLEKITLLQLDGVLTPEEYKKCIQVGVDGCKLVYELQKKALNDKYFGNKGD.

The protein belongs to the RNase PH family. Rrp41 subfamily. As to quaternary structure, component of the archaeal exosome complex. Forms a hexameric ring-like arrangement composed of 3 Rrp41-Rrp42 heterodimers. The hexameric ring associates with a trimer of Rrp4 and/or Csl4 subunits.

Its subcellular location is the cytoplasm. In terms of biological role, catalytic component of the exosome, which is a complex involved in RNA degradation. Has 3'-&gt;5' exoribonuclease activity. Can also synthesize heteromeric RNA-tails. This Nitrosopumilus maritimus (strain SCM1) protein is Exosome complex component Rrp41.